Here is a 441-residue protein sequence, read N- to C-terminus: Tol-Pal system protein TolB (441 aa).

Positions 1 to 25 (MRIFFFAYVLPTVISLLLGCQGAIA) are cleaved as a signal peptide.

The protein belongs to the TolB family. As to quaternary structure, the Tol-Pal system is composed of five core proteins: the inner membrane proteins TolA, TolQ and TolR, the periplasmic protein TolB and the outer membrane protein Pal. They form a network linking the inner and outer membranes and the peptidoglycan layer.

It is found in the periplasm. Its function is as follows. Part of the Tol-Pal system, which plays a role in outer membrane invagination during cell division and is important for maintaining outer membrane integrity. The sequence is that of Tol-Pal system protein TolB from Anaplasma marginale (strain St. Maries).